An 896-amino-acid polypeptide reads, in one-letter code: Sodium/hydrogen exchanger 5 (896 aa).

Topologically, residues 1 to 45 (MLRAALSLLALPLAGAAEEPTQKPESPGEPPPGLELFRWQWHEVE) are cytoplasmic. The chain crosses the membrane as a helical span at residues 46-66 (APYLVALWILVASLAKIVFHL). The Extracellular portion of the chain corresponds to 67–73 (SRKVTSL). A helical transmembrane segment spans residues 74–94 (VPESCLLILLGLVLGGIVLAV). Residues 95 to 103 (AKKAEYQLE) lie on the Cytoplasmic side of the membrane. A helical membrane pass occupies residues 104–124 (PGTFFLFLLPPIVLDSGYFMP). Over 125–134 (SRLFFDNLGA) the chain is Extracellular. A helical membrane pass occupies residues 135 to 155 (ILTYAVVGTLWNAFTTGAALW). Residues 156–173 (GLQQAGLVAPRVQAGLLD) are Cytoplasmic-facing. A helical membrane pass occupies residues 174–194 (FLLFGSLISAVDPVAVLAVFE). At 195 to 200 (EVHVNE) the chain is on the extracellular side. The N-linked (GlcNAc...) asparagine glycan is linked to asparagine 199. The chain crosses the membrane as a helical span at residues 201–221 (TLFIIVFGESLLNDAVTVVLY). The Cytoplasmic segment spans residues 222–246 (KVCNSFVEMGSANVQATDYLKGVAS). Residues 247 to 267 (LFVVSLGGAAVGLVFAFLLAL) form a helical membrane-spanning segment. Over 268 to 276 (TTRFTKRVR) the chain is Extracellular. A helical transmembrane segment spans residues 277-297 (IIEPLLVFLLAYAAYLTAEMA). Residues 298 to 331 (SLSAILAVTMCGLGCKKYVEANISHKSRTTVKYT) lie on the Cytoplasmic side of the membrane. A helical transmembrane segment spans residues 332–352 (MKTLASCAETVIFMLLGISAV). Residues 353 to 360 (DSSKWAWD) lie on the Extracellular side of the membrane. The chain crosses the membrane as a helical span at residues 361–381 (SGLVLGTLIFILFFRALGVVL). Residues 382-398 (QTWVLNQFRLVPLDKID) lie on the Cytoplasmic side of the membrane. The chain crosses the membrane as a helical span at residues 399–419 (QVVMSYGGLRGAVAFALVILL). Residues 420–428 (DRTKVPAKD) lie on the Extracellular side of the membrane. The chain crosses the membrane as a helical span at residues 429-449 (YFVATTIVVVFFTVIVQGLTI). Topologically, residues 450–896 (KPLVKWLKVK…CIQFNRGSRL (447 aa)) are cytoplasmic. The tract at residues 576-721 (GSGACLDLQV…SETEKEDDEG (146 aa)) is required for interaction with ARRB2. Disordered regions lie at residues 658–686 (TKSK…GKHR), 701–720 (ESEE…EDDE), and 818–864 (HPRG…QQQE). Positions 660–672 (SKPRPRKTGRRKK) are enriched in basic residues. Residues 854 to 864 (ESSADLPQQQE) show a composition bias toward polar residues.

It belongs to the monovalent cation:proton antiporter 1 (CPA1) transporter (TC 2.A.36) family. In terms of assembly, interacts with CHP1 and CHP2. Interacts with ARRB2; facilitates the endocytosis of SLC9A5 from the plasma membrane. Interacts with RACK1; this interaction positively regulates SLC9A5 activity and promotes SLC9A5 localization to focal adhesions. Interacts with SCAMP2; this interaction regulates SLC9A5 cell-surface targeting and SLC9A5 activity. Post-translationally, phosphorylated by PRKAA2; promotes its accumulation at the cell surface. Phosphorylated by CSNK2A1 in a manner favoring its beta-arrestin binding and endocytosis. Mainly expressed in brain. Expressed in neurons of the central and peripheral nervous system. Expressed also in testis, spleen, and skeletal muscle.

Its subcellular location is the cell membrane. The protein localises to the recycling endosome membrane. It localises to the cell projection. The protein resides in the dendritic spine membrane. It is found in the synaptic cell membrane. Its subcellular location is the cell junction. The protein localises to the focal adhesion. The catalysed reaction is Na(+)(in) + H(+)(out) = Na(+)(out) + H(+)(in). Its activity is regulated as follows. ATP-depletion almost completely abolishes SLC9A5 activity. Inhibited by amiloride compounds. Functionally, plasma membrane Na(+)/H(+) antiporter. Mediates the electroneutral exchange of intracellular H(+) ions for extracellular Na(+) in 1:1 stoichiometry, thus regulating intracellular pH homeostasis, in particular in neural tissues. Acts as a negative regulator of dendritic spine growth. Plays a role in postsynaptic remodeling and signaling. Can also contribute to organellar pH regulation, with consequences for receptor tyrosine kinase trafficking. The chain is Sodium/hydrogen exchanger 5 from Homo sapiens (Human).